The following is a 290-amino-acid chain: ATP synthase gamma chain (290 aa).

It belongs to the ATPase gamma chain family. In terms of assembly, F-type ATPases have 2 components, CF(1) - the catalytic core - and CF(0) - the membrane proton channel. CF(1) has five subunits: alpha(3), beta(3), gamma(1), delta(1), epsilon(1). CF(0) has three main subunits: a, b and c.

The protein resides in the cell membrane. Its function is as follows. Produces ATP from ADP in the presence of a proton gradient across the membrane. The gamma chain is believed to be important in regulating ATPase activity and the flow of protons through the CF(0) complex. The protein is ATP synthase gamma chain of Heliobacterium modesticaldum (strain ATCC 51547 / Ice1).